The sequence spans 147 residues: MGGYEDIEGFHYGQEITFAADGRPALGYVSHTWWADEPRDGREPGSPLATETGFWRVQPGEDGGSVVEVTLAHPFGIAEIYVGTVTGTRVDLDHNVLIRTATARDVTRSVRLYGIVEGGDLAYAIDMEAEGKPLQSHLSARLHRVTD.

H137 provides a ligand contact to heme b.

The protein belongs to the nitrobindin family. As to quaternary structure, homodimer. Heme b serves as cofactor.

It catalyses the reaction peroxynitrite = nitrate. It functions in the pathway nitrogen metabolism. Heme-binding protein able to scavenge peroxynitrite and to protect free L-tyrosine against peroxynitrite-mediated nitration, by acting as a peroxynitrite isomerase that converts peroxynitrite to nitrate. Therefore, this protein likely plays a role in peroxynitrite sensing and in the detoxification of reactive nitrogen and oxygen species (RNS and ROS, respectively). Is able to bind nitric oxide (NO) in vitro, but may act as a sensor of peroxynitrite levels in vivo. This is Peroxynitrite isomerase from Frankia alni (strain DSM 45986 / CECT 9034 / ACN14a).